We begin with the raw amino-acid sequence, 268 residues long: Tryptophan synthase alpha chain (268 aa).

Catalysis depends on proton acceptor residues glutamate 49 and aspartate 60.

It belongs to the TrpA family. As to quaternary structure, tetramer of two alpha and two beta chains.

The catalysed reaction is (1S,2R)-1-C-(indol-3-yl)glycerol 3-phosphate + L-serine = D-glyceraldehyde 3-phosphate + L-tryptophan + H2O. It functions in the pathway amino-acid biosynthesis; L-tryptophan biosynthesis; L-tryptophan from chorismate: step 5/5. The alpha subunit is responsible for the aldol cleavage of indoleglycerol phosphate to indole and glyceraldehyde 3-phosphate. The chain is Tryptophan synthase alpha chain from Escherichia coli O139:H28 (strain E24377A / ETEC).